We begin with the raw amino-acid sequence, 345 residues long: MSITPQEALQRTIEHREIFHDEMLHLMRMIMRGELSPVMTAAIVTGLRVKKETIGEITAAAQVMRELSRKVAVADTTHLVDIVGTGGDGANTFNISTCAMFVAAAAGAKTAKHGGRGVSSKSGSADVMESLGVHIDLPPEAIARCIADTGIGFMFAPNHHPAMKNVAPVRKELGVRTLFNILGPLTNPAGAPNILMGVFHPDLVGIQVRALQRLGAEHALVVYGRDGMDEVSLGAATMVGELKNGEITEYEIHPEDFGLAMSSNRALKVETPEQSREMLLSVLRGEPGSAREIVCLNAGVALYAANVAATMADGIARARAALDSGAALARLEQLVARTRALAAGG.

5-phospho-alpha-D-ribose 1-diphosphate-binding positions include Gly84, 87 to 88, Thr92, 94 to 97, 112 to 120, and Ser124; these read GD, NIST, and KHGGRGVSS. Gly84 serves as a coordination point for anthranilate. Residue Ser96 coordinates Mg(2+). Arg170 is an anthranilate binding site. Asp229 and Glu230 together coordinate Mg(2+).

This sequence belongs to the anthranilate phosphoribosyltransferase family. In terms of assembly, homodimer. Requires Mg(2+) as cofactor.

It catalyses the reaction N-(5-phospho-beta-D-ribosyl)anthranilate + diphosphate = 5-phospho-alpha-D-ribose 1-diphosphate + anthranilate. The protein operates within amino-acid biosynthesis; L-tryptophan biosynthesis; L-tryptophan from chorismate: step 2/5. Catalyzes the transfer of the phosphoribosyl group of 5-phosphorylribose-1-pyrophosphate (PRPP) to anthranilate to yield N-(5'-phosphoribosyl)-anthranilate (PRA). The sequence is that of Anthranilate phosphoribosyltransferase from Paracidovorax citrulli (strain AAC00-1) (Acidovorax citrulli).